The sequence spans 445 residues: Oxysterols receptor LXR-alpha (445 aa).

2 disordered regions span residues 1-34 and 62-86; these read MSLW…QGGN and TALL…KKGP. Residues 1–94 form a transactivation AF-1; required for ligand-independent transactivation function region; sequence MSLWLEAAVP…GPAPKMLGNE (94 aa). A DNA-binding region (nuclear receptor) is located at residues 93 to 168; sequence NELCSVCGDK…AGMREECVLS (76 aa). NR C4-type zinc fingers lie at residues 96 to 116 and 132 to 156; these read CSVC…CEGC and CHSG…LRKC. Positions 178–200 are disordered; it reads KRQEEEQAQATSVSPRVSSPPQV. Positions 189–200 are enriched in low complexity; it reads SVSPRVSSPPQV. Residue serine 191 is modified to Phosphoserine. Residues 203 to 445 are transactivation AF-2; required for ligand-dependent transactivation function; mediates interaction with CCAR2; it reads QLSPEQLGMI…LLSEIWDVHE (243 aa). An NR LBD domain is found at 207 to 445; that stretch reads EQLGMIEKLV…LLSEIWDVHE (239 aa).

Belongs to the nuclear hormone receptor family. NR1 subfamily. As to quaternary structure, heterodimer of NR1H3 and RXR (retinoic acid receptor). Interacts with CCAR2 (via N-terminus) in a ligand-independent manner. Interacts with SIRT1 and this interaction is inhibited by CCAR2. Post-translationally, ubiquitinated by UBR5, leading to its degradation: UBR5 specifically recognizes and binds ligand-bound NR1H3 when it is not associated with coactivators (NCOAs). In presence of NCOAs, the UBR5-degron is not accessible, preventing its ubiquitination and degradation. In adults it is expressed in spleen, pituitary, lung, liver, and fat. Weaker expression is observed in several other tissues.

The protein resides in the nucleus. Its subcellular location is the cytoplasm. Functionally, nuclear receptor that exhibits a ligand-dependent transcriptional activation activity. Interaction with retinoic acid receptor (RXR) shifts RXR from its role as a silent DNA-binding partner to an active ligand-binding subunit in mediating retinoid responses through target genes defined by LXRES. LXRES are DR4-type response elements characterized by direct repeats of two similar hexanuclotide half-sites spaced by four nucleotides. Plays an important role in the regulation of cholesterol homeostasis, regulating cholesterol uptake through MYLIP-dependent ubiquitination of LDLR, VLDLR and LRP8. Interplays functionally with RORA for the regulation of genes involved in liver metabolism. Induces LPCAT3-dependent phospholipid remodeling in endoplasmic reticulum (ER) membranes of hepatocytes, driving SREBF1 processing and lipogenesis. Via LPCAT3, triggers the incorporation of arachidonate into phosphatidylcholines of ER membranes, increasing membrane dynamics and enabling triacylglycerols transfer to nascent very low-density lipoprotein (VLDL) particles. Via LPCAT3 also counteracts lipid-induced ER stress response and inflammation, likely by modulating SRC kinase membrane compartmentalization and limiting the synthesis of lipid inflammatory mediators. The chain is Oxysterols receptor LXR-alpha (Nr1h3) from Rattus norvegicus (Rat).